The sequence spans 150 residues: Large ribosomal subunit protein bL9 (150 aa).

Belongs to the bacterial ribosomal protein bL9 family.

Its function is as follows. Binds to the 23S rRNA. The chain is Large ribosomal subunit protein bL9 from Photobacterium profundum (strain SS9).